The sequence spans 178 residues: Large ribosomal subunit protein uL6 (178 aa).

This sequence belongs to the universal ribosomal protein uL6 family. As to quaternary structure, part of the 50S ribosomal subunit.

In terms of biological role, this protein binds to the 23S rRNA, and is important in its secondary structure. It is located near the subunit interface in the base of the L7/L12 stalk, and near the tRNA binding site of the peptidyltransferase center. In Streptococcus mutans serotype c (strain ATCC 700610 / UA159), this protein is Large ribosomal subunit protein uL6.